We begin with the raw amino-acid sequence, 483 residues long: Phloretin 2'-O-glucosyltransferase (483 aa).

The active-site Proton acceptor is H15. H15 serves as a coordination point for an anthocyanidin. D118 acts as the Charge relay in catalysis. The UDP-alpha-D-glucose site is built by T140, A360, Q362, H377, W380, N381, S382, and E385. Residue A400 participates in an anthocyanidin binding. The UDP-alpha-D-glucose site is built by E401 and Q402.

Belongs to the UDP-glycosyltransferase family.

It catalyses the reaction phloretin + UDP-alpha-D-glucose = phlorizin + UDP + H(+). In terms of biological role, glycosyltransferase that possesses phloretin 2'-O-glycosyltransferase activity. Converts phloretin to phlorizin (phloretin 2'-O-glucoside), a potent antioxidant. Is specific for phloretin and does not possess glycosyltransferase activity toward caffeic acid, catechin, chlorogenic acid, 2-coumaric acid, 3-coumaric acid, 4-coumaric acid, cyanidin, 3,4-dihydroxyhydrocinnamic acid, epicatechin, 3-hydroxybenzoic acid, naringenin, 3,4-dihydroxybenzoic acid, quercetin and rutin. Can glycosylate phloretin in the presence of UDP-glucose, UDP-xylose and UDP-galactose. This Malus domestica (Apple) protein is Phloretin 2'-O-glucosyltransferase.